Here is a 64-residue protein sequence, read N- to C-terminus: Putative neurotoxin-G (64 aa).

Positions 1 to 19 (MFAMVTVTVLLLISSGIFC) are cleaved as a signal peptide. Disulfide bonds link Cys25–Cys45, Cys32–Cys54, and Cys36–Cys56.

In terms of tissue distribution, expressed by the venom gland.

The protein localises to the secreted. The chain is Putative neurotoxin-G from Lychas mucronatus (Chinese swimming scorpion).